Here is a 352-residue protein sequence, read N- to C-terminus: Phosphoribosylformylglycinamidine cyclo-ligase (352 aa).

Belongs to the AIR synthase family.

The protein localises to the cytoplasm. The enzyme catalyses 2-formamido-N(1)-(5-O-phospho-beta-D-ribosyl)acetamidine + ATP = 5-amino-1-(5-phospho-beta-D-ribosyl)imidazole + ADP + phosphate + H(+). It participates in purine metabolism; IMP biosynthesis via de novo pathway; 5-amino-1-(5-phospho-D-ribosyl)imidazole from N(2)-formyl-N(1)-(5-phospho-D-ribosyl)glycinamide: step 2/2. The polypeptide is Phosphoribosylformylglycinamidine cyclo-ligase (Coxiella burnetii (strain RSA 331 / Henzerling II)).